Reading from the N-terminus, the 313-residue chain is Serine/threonine-protein phosphatase PP2A-4 catalytic subunit (313 aa).

Mn(2+) is bound by residues Asp-61, His-63, Asp-89, and Asn-121. Catalysis depends on His-122, which acts as the Proton donor. Mn(2+) contacts are provided by His-171 and His-245. Leu-313 carries the post-translational modification Leucine methyl ester.

It belongs to the PPP phosphatase family. PP-2A subfamily. As to quaternary structure, PP2A consists of a common heterodimeric core enzyme, composed of a 36 kDa catalytic subunit (subunit C) and a 65 kDa constant regulatory subunit (subunit A), that associates with a variety of regulatory subunits such as subunits B (the R2/B/PR55/B55, R3/B''/PR72/PR130/PR59 and R5/B'/B56 families). Interacts with SIC/RON3. Mn(2+) is required as a cofactor. Reversibly methyl esterified on Leu-313 by leucine carboxyl methyltransferase 1 (LCMT1) and pectin methylesterase 1 (PME1). Carboxyl methylation influences the affinity of the catalytic subunit for the different regulatory subunits, thereby modulating the PP2A holoenzyme's substrate specificity, enzyme activity and cellular localization. Post-translationally, phosphorylation of either threonine (by autophosphorylation-activated protein kinase) or tyrosine results in inactivation of the phosphatase. Auto-dephosphorylation has been suggested as a mechanism for reactivation.

Its subcellular location is the cytoplasm. The enzyme catalyses O-phospho-L-seryl-[protein] + H2O = L-seryl-[protein] + phosphate. It catalyses the reaction O-phospho-L-threonyl-[protein] + H2O = L-threonyl-[protein] + phosphate. Functionally, functions redundantly with PP2A3, and is involved in establishing auxin gradients, apical-basal axis of polarity and root and shoot apical meristem during embryogenesis. May dephosphorylate PIN1 and regulate its subcellular distribution for polar auxin transport. The holoenzyme composed of PP2AA1, PP2A4 and B'ZETA or B'ETA acts as a negative regulator of plant innate immunity by controlling BAK1 phosphorylation state and activation in surface-localized immune receptor complexes. This Arabidopsis thaliana (Mouse-ear cress) protein is Serine/threonine-protein phosphatase PP2A-4 catalytic subunit.